Here is a 352-residue protein sequence, read N- to C-terminus: Phenylalanine--tRNA ligase alpha subunit (352 aa).

Mg(2+) is bound at residue E258.

The protein belongs to the class-II aminoacyl-tRNA synthetase family. Phe-tRNA synthetase alpha subunit type 1 subfamily. In terms of assembly, tetramer of two alpha and two beta subunits. Mg(2+) is required as a cofactor.

The protein localises to the cytoplasm. The catalysed reaction is tRNA(Phe) + L-phenylalanine + ATP = L-phenylalanyl-tRNA(Phe) + AMP + diphosphate + H(+). This chain is Phenylalanine--tRNA ligase alpha subunit, found in Staphylococcus saprophyticus subsp. saprophyticus (strain ATCC 15305 / DSM 20229 / NCIMB 8711 / NCTC 7292 / S-41).